Consider the following 761-residue polypeptide: MRVPLIDFLRFLVLILSLSGASVAADATVKQNFNKYETDSGHAHPPPIYGAPPSYTTPPPPIYSPPIYPPPIQKPPTYSPPIYPPPIQKPPTPTYSPPIYPPPIQKPPTPTYSPPIYPPPIQKPPTPTYSPPIYPPPIQKPPTPSYSPPVKPPPVQMPPTPTYSPPIKPPPVHKPPTPTYSPPIKPPVHKPPTPIYSPPIKPPPVHKPPTPIYSPPIKPPPVHKPPTPTYSPPVKPPPVHKPPTPIYSPPIKPPPVHKPPTPIYSPPVKPPPVQTPPTPIYSPPVKPPPVHKPPTPTYSPPVKSPPVQKPPTPTYSPPIKPPPVQKPPTPTYSPPIKPPPVKPPTPIYSPPVKPPPVHKPPTPIYSPPVKPPPVHKPPTPIYSPPVKPPPIQKPPTPTYSPPIKPPPLQKPPTPTYSPPIKLPPVKPPTPIYSPPVKPPPVHKPPTPIYSPPVKPPPVHKPPTPTYSPPIKPPPVKPPTPTYSPPVQPPPVQKPPTPTYSPPVKPPPIQKPPTPTYSPPIKPPPVKPPTPTYSPPIKPPPVHKPPTPTYSPPIKPPPIHKPPTPTYSPPIKPPPVHKPPTPTYSPPIKPPPVHKPPTPTYSPPIKPPPVHKPPTPTYSPPIKPPPVHKPPTPTYSPPIKPPPVHKPPTPTYSPPIKPPPVQKPPTPTYSPPVKPPPVQLPPTPTYSPPVKPPPVQVPPTPTYSPPVKPPPVQVPPTPTYSPPIKPPPVQVPPTPTTPSPPQGGYGTPPPYAYLSHPIDIRN.

Residues 1–24 form the signal peptide; the sequence is MRVPLIDFLRFLVLILSLSGASVA. Residues 63 to 77 form a 1; degenerate repeat; that stretch reads YSPPIYPPPIQKPPT. The interval 63 to 735 is 40 X 17 AA approximate tandem repeats of Y-S-P-P-[IV]-[KY]-P-P-P-x(1,2)-K-P-P-T-P-T; the sequence is YSPPIYPPPI…PPVQVPPTPT (673 aa). A run of 39 repeats spans residues 78–94, 95–111, 112–128, 129–145, 146–162, 163–179, 180–195, 196–212, 213–229, 230–246, 247–263, 264–280, 281–297, 298–314, 315–331, 332–347, 348–364, 365–381, 382–398, 399–415, 416–431, 432–448, 449–465, 466–481, 482–498, 499–515, 516–531, 532–548, 549–565, 566–582, 583–599, 600–616, 617–633, 634–650, 651–667, 668–684, 685–701, 702–718, and 719–735. Residues 111 to 750 show a composition bias toward pro residues; the sequence is TYSPPIYPPP…QGGYGTPPPY (640 aa). The segment at 111–761 is disordered; it reads TYSPPIYPPP…YLSHPIDIRN (651 aa).

Belongs to the extensin family. In terms of tissue distribution, specifically expressed in endosperm during seed germination, at the site of radicle protrusion.

Its subcellular location is the secreted. The protein localises to the primary cell wall. In terms of biological role, may have a specific role in modifying the cell-wall structure, specifically during seed germination, thus facilitating radicle protrusion. The chain is Proline-rich extensin-like protein EPR1 (EPR1) from Arabidopsis thaliana (Mouse-ear cress).